We begin with the raw amino-acid sequence, 585 residues long: Lipoprotein LpqB (585 aa).

The first 18 residues, 1–18 (MKRLLTVLVVGLVALVSG), serve as a signal peptide directing secretion. Residue C19 is the site of N-palmitoyl cysteine attachment. The S-diacylglycerol cysteine moiety is linked to residue C19. Residues 24 to 46 (SSSSPQAIGTVERPAPPSLPKPT) form a disordered region. Pro residues predominate over residues 37–46 (PAPPSLPKPT).

Belongs to the LpqB lipoprotein family. Interacts with MtrB, probably extracytoplasmically via its sensor domain.

The protein resides in the cell membrane. Its subcellular location is the secreted. It localises to the cell wall. In terms of biological role, may modulate activity of the MtrAB system in controlling homeostasis of the cell wall and cell division. In Mycolicibacterium smegmatis (strain ATCC 700084 / mc(2)155) (Mycobacterium smegmatis), this protein is Lipoprotein LpqB.